The sequence spans 192 residues: Ion-translocating oxidoreductase complex subunit A (192 aa).

The next 6 helical transmembrane spans lie at 5–25 (LLLL…FLGL), 38–58 (AIGM…LSFL), 72–92 (LRTM…EMLV), 102–122 (ALGI…VALL), 134–154 (AIYG…FSAM), and 171–191 (AIAM…AGLI).

It belongs to the NqrDE/RnfAE family. In terms of assembly, the complex is composed of six subunits: RnfA, RnfB, RnfC, RnfD, RnfE and RnfG.

It localises to the cell inner membrane. Part of a membrane-bound complex that couples electron transfer with translocation of ions across the membrane. The protein is Ion-translocating oxidoreductase complex subunit A of Shewanella denitrificans (strain OS217 / ATCC BAA-1090 / DSM 15013).